The sequence spans 1458 residues: ABC multidrug transporter B (1458 aa).

5 consecutive transmembrane segments (helical) span residues 30–50 (FSLLFEELILGILPLGIVLII), 70–90 (LLWAKITAWLALGIVQLVLAV), 102–122 (ASIAANAIITVGFFILCLLSC), 128–148 (STTPSFLLNIYLLFTLLFDIA), and 165–185 (IAILTSVTVGIKFLLLILEAV). Residue Asn208 is glycosylated (N-linked (GlcNAc...) asparagine). Residues 273 to 295 (WPLLSAVPPRACLAALNFCQPLL) traverse the membrane as a helical segment. One can recognise an ABC transmembrane type-1 1 domain in the interval 283-561 (ACLAALNFCQ…LVMALMTFVG (279 aa)). N-linked (GlcNAc...) asparagine glycosylation occurs at Asn309. 5 helical membrane passes run 314–334 (IGYGLIGAYILVYIGMGVTMG), 387–407 (WQTIHDIWGNAAEIALAIYLL), 411–431 (LGVACVVPVGVALVALIGCLI), 501–521 (LGWTTRIFAPIFALGAFYGIM), and 541–561 (LFALLADPLLSLVMALMTFVG). In terms of domain architecture, ABC transporter 1 spans 626 to 853 (LTVKNATFAW…AGGYVSSFGL (228 aa)). A glycan (N-linked (GlcNAc...) asparagine) is linked at Asn630. 660 to 667 (GPSGCGKS) is a binding site for ATP. 3 N-linked (GlcNAc...) asparagine glycosylation sites follow: Asn702, Asn804, and Asn879. Residues 933–1182 (PNGRTGYYLG…LVTFWTNLET (250 aa)) enclose the ABC transmembrane type-1 2 domain. The next 6 membrane-spanning stretches (helical) occupy residues 940–960 (YLGIYAMLGAVGMLSLIIGCW), 978–998 (LLATVLNAPMSFFAATDSGSI), 1016–1036 (AAINTFATLILCLAQMILMGI), 1040–1060 (YAAISFPLVILAVYSIQKVYL), 1125–1145 (LTLTLDMVVAAIAVILIVLVV), and 1156–1176 (VGVALLNVILFSQSIKLLVTF). The ABC transporter 2 domain maps to 1219 to 1449 (IEFKSVSAEY…EGSYFSRLYA (231 aa)). 1252-1259 (GRTGSGKT) is an ATP binding site. N-linked (GlcNAc...) asparagine glycosylation is present at Asn1316.

Belongs to the ABC transporter superfamily. ABCC family. Conjugate transporter (TC 3.A.1.208) subfamily.

It localises to the cell membrane. Its function is as follows. Pleiotropic ABC efflux transporter that may be involved in A.fumigatus adaptation to azoles such as vorizonazole. This Aspergillus fumigatus (strain ATCC MYA-4609 / CBS 101355 / FGSC A1100 / Af293) (Neosartorya fumigata) protein is ABC multidrug transporter B.